A 387-amino-acid polypeptide reads, in one-letter code: Erythronate-4-phosphate dehydrogenase (387 aa).

Substrate-binding residues include Ser-45 and Thr-67. NAD(+) is bound at residue Asp-147. Arg-208 is an active-site residue. Asp-232 is an NAD(+) binding site. Residue Glu-237 is part of the active site. Catalysis depends on His-254, which acts as the Proton donor. Position 257 (Gly-257) interacts with NAD(+). Tyr-258 is a substrate binding site.

Belongs to the D-isomer specific 2-hydroxyacid dehydrogenase family. PdxB subfamily. In terms of assembly, homodimer.

The protein resides in the cytoplasm. The enzyme catalyses 4-phospho-D-erythronate + NAD(+) = (R)-3-hydroxy-2-oxo-4-phosphooxybutanoate + NADH + H(+). It participates in cofactor biosynthesis; pyridoxine 5'-phosphate biosynthesis; pyridoxine 5'-phosphate from D-erythrose 4-phosphate: step 2/5. Its function is as follows. Catalyzes the oxidation of erythronate-4-phosphate to 3-hydroxy-2-oxo-4-phosphonooxybutanoate. The polypeptide is Erythronate-4-phosphate dehydrogenase (Shewanella violacea (strain JCM 10179 / CIP 106290 / LMG 19151 / DSS12)).